The primary structure comprises 890 residues: MRQKETTATTRFSLLPGSITRFFLLLIIVLLVTMGVMVQSAVNAWLKDKSYQIVDITHAIQKRVDNWRYVTWQIYDNIAATTSPSSGEGLQETRLKQDVYYLEKPRRKTEALIFGSHDNSTLEMTQRMSTYLDTLWGAENVPWSMYYLNGQDNSLVLISTLPLKDLTSGFKESTVSDIVDSRRAEMLQQANALDERESFSNMRRLAWQNGHYFTLRTTFNQPGHLATVVAFDLPINDLIPPGMPLDSFRLEPDATATGNNDNEKEGTDSVSIHFNSTKIEISSALNSTDMRLVWQVPYGTLLLDTLQNILLPLLLNIGLLALALFGYTTFRHFSSRSTENVPSTAVNNELRILRAINEEIVSLLPLGLLVHDQESNRTVISNKIADHLLPHLNLQNITTMAEQHQGIIQATINNELYEIRMFRSQVAPRTQIFIIRDQDREVLVNKKLKQAQRLYEKNQQGRMIFMKNIGDALKEPAQSLAESAAKLNAPESKQLANQADVLVRLVDEIQLANMLADDSWKSETVLFSVQDLIDEVVPSVLPAIKRKGLQLLINNHLKAHDMRRGDRDALRRILLLLMQYAVTSTQLGKITLEVDQDESSEDRLTFRILDTGEGVSIHEMDNLHFPFINQTQNDRYGKADPLAFWLSDQLARKLGGHLNIKTRDGLGTRYSVHIKMLAADPEVEEEEERLLDDVCVMVDVTSAEIRNIVTRQLENWGATCITPDERLISQDYDIFLTDNPSNLTASGLLLSDDESGVREIGPGQLCVNFNMSNAMQEAVLQLIEVQLAQEEVTESPLGGDENAQLHASGYYALFVDTVPDDVKRLYTEAATSDFAALAQTAHRLKGVFAMLNLVPGKQLCETLEHLIREKDVPGIEKYISDIDSYVKSLL.

At 1 to 21 (MRQKETTATTRFSLLPGSITR) the chain is on the cytoplasmic side. The chain crosses the membrane as a helical span at residues 22–42 (FFLLLIIVLLVTMGVMVQSAV). Topologically, residues 43–308 (NAWLKDKSYQ…GTLLLDTLQN (266 aa)) are periplasmic. The chain crosses the membrane as a helical span at residues 309 to 329 (ILLPLLLNIGLLALALFGYTT). At 330-890 (FRHFSSRSTE…DIDSYVKSLL (561 aa)) the chain is on the cytoplasmic side. Residues 468–678 (NIGDALKEPA…RYSVHIKMLA (211 aa)) are histidine-like kinase. Residues 803–890 (AQLHASGYYA…DIDSYVKSLL (88 aa)) form the HPt domain. Residue His842 is modified to Phosphohistidine.

This sequence belongs to the RcsD family. In terms of assembly, interacts with RcsC and RcsB. Has a higher affinity for RcsB than for RcsC. Post-translationally, phosphorylated by RcsC.

Its subcellular location is the cell inner membrane. Component of the Rcs signaling system, which controls transcription of numerous genes. RcsD is a phosphotransfer intermediate between the sensor kinase RcsC and the response regulator RcsB. It acquires a phosphoryl group from RcsC and transfers it to RcsB. The system controls expression of genes involved in colanic acid capsule synthesis, biofilm formation and cell division. This is Phosphotransferase RcsD from Escherichia coli (strain K12).